We begin with the raw amino-acid sequence, 258 residues long: MSIIDAVILGIVEGLTEFLPVSSTGHLILTAGLLNLEQTDTLKCFEVVIQLGSILAVVFTFFERLKRDKQLWIKLIIGFLPTAAIGYLLYSHIKSLFSQNVVVYMLIIWGVIFIVVELLRKKNPPENEILTLDGISYKQAFFIGLSQCFAMVPGTSRSGATIIAGLLSGLNRQTAAAFSFLLAVPTMFAATFYDTYKNREIFAANMDNIQLFLLGGFVAFLVALFAIKMFLKFVSRFDYIPFGIYRILIAFAFMFFVL.

The next 8 helical transmembrane spans lie at 1-21, 42-62, 71-91, 96-116, 134-154, 173-193, 211-231, and 237-257; these read MSII…FLPV, LKCF…FTFF, LWIK…LLYS, LFSQ…FIVV, GISY…MVPG, QTAA…ATFY, LFLL…KMFL, and FDYI…MFFV.

It belongs to the UppP family.

Its subcellular location is the cell inner membrane. The enzyme catalyses di-trans,octa-cis-undecaprenyl diphosphate + H2O = di-trans,octa-cis-undecaprenyl phosphate + phosphate + H(+). In terms of biological role, catalyzes the dephosphorylation of undecaprenyl diphosphate (UPP). Confers resistance to bacitracin. The protein is Undecaprenyl-diphosphatase of Campylobacter hominis (strain ATCC BAA-381 / DSM 21671 / CCUG 45161 / LMG 19568 / NCTC 13146 / CH001A).